We begin with the raw amino-acid sequence, 429 residues long: 3-phosphoshikimate 1-carboxyvinyltransferase (429 aa).

Positions 23, 24, and 28 each coordinate 3-phosphoshikimate. Residue K23 participates in phosphoenolpyruvate binding. Phosphoenolpyruvate contacts are provided by G95 and R123. Positions 168, 170, 316, and 343 each coordinate 3-phosphoshikimate. Residue Q170 coordinates phosphoenolpyruvate. The active-site Proton acceptor is the D316. Phosphoenolpyruvate-binding residues include R347 and R389.

This sequence belongs to the EPSP synthase family. As to quaternary structure, monomer.

The protein resides in the cytoplasm. The catalysed reaction is 3-phosphoshikimate + phosphoenolpyruvate = 5-O-(1-carboxyvinyl)-3-phosphoshikimate + phosphate. The protein operates within metabolic intermediate biosynthesis; chorismate biosynthesis; chorismate from D-erythrose 4-phosphate and phosphoenolpyruvate: step 6/7. Catalyzes the transfer of the enolpyruvyl moiety of phosphoenolpyruvate (PEP) to the 5-hydroxyl of shikimate-3-phosphate (S3P) to produce enolpyruvyl shikimate-3-phosphate and inorganic phosphate. This is 3-phosphoshikimate 1-carboxyvinyltransferase from Bacillus cereus (strain AH187).